The following is a 358-amino-acid chain: tRNA-specific 2-thiouridylase MnmA (358 aa).

Residues 8–15 and Met-34 each bind ATP; that span reads GLSGGVDS. Residues 94 to 96 are interaction with target base in tRNA; sequence NPD. Cys-99 functions as the Nucleophile in the catalytic mechanism. A disulfide bridge connects residues Cys-99 and Cys-196. Gly-123 serves as a coordination point for ATP. The tract at residues 146 to 148 is interaction with tRNA; that stretch reads KDQ. The active-site Cysteine persulfide intermediate is the Cys-196. Residues 308 to 309 are interaction with tRNA; that stretch reads RY.

This sequence belongs to the MnmA/TRMU family.

It is found in the cytoplasm. It carries out the reaction S-sulfanyl-L-cysteinyl-[protein] + uridine(34) in tRNA + AH2 + ATP = 2-thiouridine(34) in tRNA + L-cysteinyl-[protein] + A + AMP + diphosphate + H(+). In terms of biological role, catalyzes the 2-thiolation of uridine at the wobble position (U34) of tRNA, leading to the formation of s(2)U34. This Thiobacillus denitrificans (strain ATCC 25259 / T1) protein is tRNA-specific 2-thiouridylase MnmA.